Reading from the N-terminus, the 121-residue chain is UPF0295 protein OB0906 (121 aa).

2 helical membrane passes run I14–L34 and V43–I63.

This sequence belongs to the UPF0295 family.

It is found in the cell membrane. In Oceanobacillus iheyensis (strain DSM 14371 / CIP 107618 / JCM 11309 / KCTC 3954 / HTE831), this protein is UPF0295 protein OB0906.